The primary structure comprises 151 residues: MKCPYCGYIEDRVIDSRPTDEGSAIRRRRECSKCLKRFTTYEKVESLPIMVIKKDKSRQAFDREKLLNGILRACEKRPVSIEQLEKLVDDIESQIHNSLQREVTSKDIGEMVMAKLKNLDEVAYVRFASVYRQFKDINTFMDELRKLLNEK.

A zinc finger spans residues 3-34 (CPYCGYIEDRVIDSRPTDEGSAIRRRRECSKC). The 91-residue stretch at 49-139 (IMVIKKDKSR…VYRQFKDINT (91 aa)) folds into the ATP-cone domain.

It belongs to the NrdR family. The cofactor is Zn(2+).

In terms of biological role, negatively regulates transcription of bacterial ribonucleotide reductase nrd genes and operons by binding to NrdR-boxes. The polypeptide is Transcriptional repressor NrdR (Acetivibrio thermocellus (strain ATCC 27405 / DSM 1237 / JCM 9322 / NBRC 103400 / NCIMB 10682 / NRRL B-4536 / VPI 7372) (Clostridium thermocellum)).